A 364-amino-acid chain; its full sequence is MKKLAISIGDINGIGLEILVRSHEELSKICTPFYFIHESLLDKASKLLNLKLFNAKIVAFKDGKDYEFNFVKKENSLEIYSFYLPLDFKVDENFEIKAGEIDTKSGLYGFLSFKAASYFVYEKHAHALLTLPIHKKAWEDAGLKYKGHTDALRDFFKKNAIMMLGCKELFVGLFSEHIPLAKVSKKITFKNLSIFLKDFYKETHFKKMGLLGFNPHAGDYGVIGGEEEKIMEKAIAFVNAFLHSKKDEKFFKKALKDENLQKELLLNFKGKGVYLPHPLVADTAFTKTGLKNCNRLVAMYHDLALAPLKALYFDKSINVSLNLPIIRVSVDHGTAFDKAYKNAKINTKSYFEAAKFAINLHSKA.

Residues His148 and Thr149 each coordinate substrate. Residues His177, His216, and His301 each coordinate a divalent metal cation. Lys309, Asn318, and Arg327 together coordinate substrate.

This sequence belongs to the PdxA family. Homodimer. Requires Zn(2+) as cofactor. Mg(2+) serves as cofactor. It depends on Co(2+) as a cofactor.

The protein localises to the cytoplasm. It catalyses the reaction 4-(phosphooxy)-L-threonine + NAD(+) = 3-amino-2-oxopropyl phosphate + CO2 + NADH. Its pathway is cofactor biosynthesis; pyridoxine 5'-phosphate biosynthesis; pyridoxine 5'-phosphate from D-erythrose 4-phosphate: step 4/5. Its function is as follows. Catalyzes the NAD(P)-dependent oxidation of 4-(phosphooxy)-L-threonine (HTP) into 2-amino-3-oxo-4-(phosphooxy)butyric acid which spontaneously decarboxylates to form 3-amino-2-oxopropyl phosphate (AHAP). The polypeptide is 4-hydroxythreonine-4-phosphate dehydrogenase (Campylobacter jejuni (strain RM1221)).